The sequence spans 376 residues: Probable low-specificity L-threonine aldolase (376 aa).

Residues 1–21 (MSGSVTSTTTETRLCPSNQGS) show a composition bias toward polar residues. The tract at residues 1–22 (MSGSVTSTTTETRLCPSNQGSA) is disordered. Lysine 226 carries the post-translational modification N6-(pyridoxal phosphate)lysine.

Belongs to the threonine aldolase family. Homotetramer. It depends on pyridoxal 5'-phosphate as a cofactor.

It carries out the reaction L-threonine = acetaldehyde + glycine. The catalysed reaction is L-allo-threonine = acetaldehyde + glycine. The protein operates within amino-acid degradation; L-threonine degradation via aldolase pathway; acetaldehyde and glycine from L-threonine: step 1/1. In Schizosaccharomyces pombe (strain 972 / ATCC 24843) (Fission yeast), this protein is Probable low-specificity L-threonine aldolase (gly1).